A 285-amino-acid chain; its full sequence is NADH-dependent oxidoreductase ucdB (285 aa).

Threonine 87 contacts NAD(+). The active site involves lysine 156.

It belongs to the HIBADH-related family. NP60 subfamily.

It participates in secondary metabolite biosynthesis. Its function is as follows. Nonribosomal peptide synthetase that mediates the biosynthesis of usterphenyllins and uscandidusins, p-terphenyl derivatives. Within the pathway, ucdB alone catalyzes both reduction and dehydration of atromentin to form a terphenyl triol intermediate. The pathway begin with the biosynthesis of 4-hydroxyphenylpyruvate (HPPA) from L-tyrosine, possibly by the aminotransferase ucdG. The nonribosomal peptide synthetase ucdA then condenses two HPPA units to produce atromentin. The key step in this pathway is the reduction and dehydration of atromentin to form a terphenyl triol intermediate, performed by the NAD-dependent dehydrogenase ucdB. Further O-methylation by the methyltransferase ucdC forms terphenyllin carrying two methoxy moieties at C-9 and C-12, and subsequent dihydroxylation at C-3 of ring A and C-15 of ring C by the flavin-dependent oxygenase ucdD leads to 3,15-dihydroxyterphenyllin. Prenylation by ucdE at position C-5 of ring A forms usterphenyllin B, and is followed by a second prenylation at position C-14 of ring C to form usterphenyllin A. The following furan ring formation that leads to uscandidusins A and B was proven to be an unexpected spontaneous non-enzymatic reaction. The protein is NADH-dependent oxidoreductase ucdB of Aspergillus ustus.